The sequence spans 180 residues: MSRIGNRILTIPAGVEVSVASDNTVTVKGSKGTLTQKFAEVITIKVEGAELSTTRANEIKHTKQLHGTTNSLLQGMLIGVSEGFKKTLDINGVGYRAALAGSKLNLSLGYSHPVEYTIPQGITVECPKPTQIIISGIDKQVVGQVAAEIRSYRRPEPYKGKGIKYSDEIIIRKEGKAAGK.

The protein belongs to the universal ribosomal protein uL6 family. Part of the 50S ribosomal subunit.

Its function is as follows. This protein binds to the 23S rRNA, and is important in its secondary structure. It is located near the subunit interface in the base of the L7/L12 stalk, and near the tRNA binding site of the peptidyltransferase center. The protein is Large ribosomal subunit protein uL6 of Mesoplasma florum (strain ATCC 33453 / NBRC 100688 / NCTC 11704 / L1) (Acholeplasma florum).